Consider the following 66-residue polypeptide: Toxin Boma6e (66 aa).

The LCN-type CS-alpha/beta domain occupies 2–64 (RDAYIAQNYN…VPLKVQGKCH (63 aa)). 3 cysteine pairs are disulfide-bonded: Cys-12/Cys-63, Cys-22/Cys-46, and Cys-26/Cys-48.

The protein belongs to the long (3 C-C) scorpion toxin superfamily. Only three disulfide bridges can be formed, because only seven cysteines are present. Expressed by the venom gland.

The protein resides in the secreted. In terms of biological role, binds voltage-independently at site-3 of sodium channels (Nav) and inhibits the inactivation of the activated channels, thereby blocking neuronal transmission. In Buthus occitanus mardochei (Moroccan scorpion), this protein is Toxin Boma6e.